The sequence spans 155 residues: Transcriptional repressor NrdR (155 aa).

A zinc finger lies at 3–34; the sequence is CPKCDHNGTRVLDSRPVQDHYSIRRRRECEKC. Residues 49–139 form the ATP-cone domain; sequence LIIVKKDGNR…VYRQFKDITV (91 aa).

Belongs to the NrdR family. Zn(2+) is required as a cofactor.

In terms of biological role, negatively regulates transcription of bacterial ribonucleotide reductase nrd genes and operons by binding to NrdR-boxes. The sequence is that of Transcriptional repressor NrdR from Exiguobacterium sp. (strain ATCC BAA-1283 / AT1b).